Reading from the N-terminus, the 320-residue chain is Acyl-coenzyme A thioesterase 8 (320 aa).

Residues aspartate 233, serine 255, and glutamine 305 each act as charge relay system in the active site. A Microbody targeting signal motif is present at residues 318 to 320; sequence SKL.

The protein belongs to the C/M/P thioester hydrolase family. Homodimer.

Its subcellular location is the peroxisome matrix. It carries out the reaction choloyl-CoA + H2O = cholate + CoA + H(+). The enzyme catalyses chenodeoxycholoyl-CoA + H2O = chenodeoxycholate + CoA + H(+). It catalyses the reaction acetyl-CoA + H2O = acetate + CoA + H(+). The catalysed reaction is butanoyl-CoA + H2O = butanoate + CoA + H(+). It carries out the reaction hexanoyl-CoA + H2O = hexanoate + CoA + H(+). The enzyme catalyses octanoyl-CoA + H2O = octanoate + CoA + H(+). It catalyses the reaction decanoyl-CoA + H2O = decanoate + CoA + H(+). The catalysed reaction is dodecanoyl-CoA + H2O = dodecanoate + CoA + H(+). It carries out the reaction tetradecanoyl-CoA + H2O = tetradecanoate + CoA + H(+). The enzyme catalyses 4,8-dimethylnonanoyl-CoA + H2O = 4,8-dimethylnonanoate + CoA + H(+). It catalyses the reaction 2,6-dimethylheptanoyl-CoA + H2O = 2,6-dimethylheptanoate + CoA + H(+). The catalysed reaction is malonyl-CoA + H2O = malonate + CoA + H(+). It carries out the reaction acetoacetyl-CoA + H2O = acetoacetate + CoA + H(+). The enzyme catalyses propanoyl-CoA + H2O = propanoate + CoA + H(+). It catalyses the reaction succinyl-CoA + H2O = succinate + CoA + H(+). The catalysed reaction is glutaryl-CoA + H2O = glutarate + CoA + H(+). It carries out the reaction hexanedioyl-CoA + H2O = hexanedioate + CoA + H(+). The enzyme catalyses octanedioyl-CoA + H2O = octanedioate + CoA + H(+). It catalyses the reaction decanedioyl-CoA + H2O = decanedioate + CoA + H(+). The catalysed reaction is dodecanedioyl-CoA + H2O = dodecanedioate + CoA + H(+). It carries out the reaction (9Z)-tetradecenoyl-CoA + H2O = (9Z)-tetradecenoate + CoA + H(+). The enzyme catalyses hexadecanoyl-CoA + H2O = hexadecanoate + CoA + H(+). It catalyses the reaction (9Z)-hexadecenoyl-CoA + H2O = (9Z)-hexadecenoate + CoA + H(+). The catalysed reaction is octadecanoyl-CoA + H2O = octadecanoate + CoA + H(+). It carries out the reaction (9Z)-octadecenoyl-CoA + H2O = (9Z)-octadecenoate + CoA + H(+). The enzyme catalyses (9Z,12Z)-octadecadienoyl-CoA + H2O = (9Z,12Z)-octadecadienoate + CoA + H(+). It catalyses the reaction eicosanoyl-CoA + H2O = eicosanoate + CoA + H(+). The catalysed reaction is (5Z,8Z,11Z,14Z)-eicosatetraenoyl-CoA + H2O = (5Z,8Z,11Z,14Z)-eicosatetraenoate + CoA + H(+). It carries out the reaction (3S)-3-hydroxy-3-methylglutaryl-CoA + H2O = 3-hydroxy-3-methylglutarate + CoA + H(+). The enzyme catalyses 3alpha,7alpha,12alpha-trihydroxy-5beta-cholestan-26-oyl-CoA + H2O = 3alpha,7alpha,12alpha-trihydroxy-5beta-cholestan-26-oate + CoA + H(+). It catalyses the reaction 2-methyloctadecanoyl-CoA + H2O = 2-methyloctadecanoate + CoA + H(+). The catalysed reaction is prostaglandin F2alpha-CoA + H2O = prostaglandin F2alpha + CoA + H(+). Inhibited by CoASH (IC(50)=10-15 uM). Also inhibited by cysteine-reactive agents. Functionally, catalyzes the hydrolysis of acyl-CoAs into free fatty acids and coenzyme A (CoASH), regulating their respective intracellular levels. Displays no strong substrate specificity with respect to the carboxylic acid moiety of Acyl-CoAs. Hydrolyzes medium length (C2 to C20) straight-chain, saturated and unsaturated acyl-CoAS but is inactive towards substrates with longer aliphatic chains. Moreover, it catalyzes the hydrolysis of CoA esters of bile acids, such as choloyl-CoA and chenodeoxycholoyl-CoA and competes with bile acid CoA:amino acid N-acyltransferase (BAAT). Is also able to hydrolyze CoA esters of dicarboxylic acids. It is involved in the metabolic regulation of peroxisome proliferation. This is Acyl-coenzyme A thioesterase 8 (Acot8) from Rattus norvegicus (Rat).